The following is a 402-amino-acid chain: Diaminopimelate decarboxylase (402 aa).

Lys-45 is subject to N6-(pyridoxal phosphate)lysine. Pyridoxal 5'-phosphate is bound by residues Gly-224 and 259–262 (EPGR). Substrate-binding residues include Arg-262, Arg-298, and Tyr-302. The Proton donor role is filled by Cys-327. Positions 328 and 356 each coordinate substrate. Position 356 (Tyr-356) interacts with pyridoxal 5'-phosphate.

Belongs to the Orn/Lys/Arg decarboxylase class-II family. LysA subfamily. In terms of assembly, homodimer. Pyridoxal 5'-phosphate serves as cofactor.

It carries out the reaction meso-2,6-diaminopimelate + H(+) = L-lysine + CO2. Its pathway is amino-acid biosynthesis; L-lysine biosynthesis via DAP pathway; L-lysine from DL-2,6-diaminopimelate: step 1/1. Its function is as follows. Specifically catalyzes the decarboxylation of meso-diaminopimelate (meso-DAP) to L-lysine. The polypeptide is Diaminopimelate decarboxylase (Campylobacter jejuni subsp. jejuni serotype O:2 (strain ATCC 700819 / NCTC 11168)).